The primary structure comprises 276 residues: UPF0328 protein ECU03_0010 (276 aa).

Disordered stretches follow at residues 1-132 (MAAP…PIIS) and 156-176 (SFCQNTRDSPSLPPQRPNMVH). Residues 106-126 (HTEGCHTHEANPEPNTKHTET) are compositionally biased toward basic and acidic residues.

The protein belongs to the UPF0328 family.

This Encephalitozoon cuniculi (strain GB-M1) (Microsporidian parasite) protein is UPF0328 protein ECU03_0010.